We begin with the raw amino-acid sequence, 801 residues long: Lon protease 2 (801 aa).

The 196-residue stretch at Leu14–Leu209 folds into the Lon N-terminal domain. An ATP-binding site is contributed by Gly361–Thr368. The 182-residue stretch at Asp597–Lys778 folds into the Lon proteolytic domain. Residues Ser684 and Lys727 contribute to the active site. The span at Ala780–Lys791 shows a compositional bias: basic and acidic residues. Residues Ala780–Ala801 form a disordered region. A compositionally biased stretch (basic residues) spans Asp792–Ala801.

The protein belongs to the peptidase S16 family. As to quaternary structure, homohexamer. Organized in a ring with a central cavity.

It is found in the cytoplasm. It catalyses the reaction Hydrolysis of proteins in presence of ATP.. ATP-dependent serine protease that mediates the selective degradation of mutant and abnormal proteins as well as certain short-lived regulatory proteins. Required for cellular homeostasis and for survival from DNA damage and developmental changes induced by stress. Degrades polypeptides processively to yield small peptide fragments that are 5 to 10 amino acids long. Binds to DNA in a double-stranded, site-specific manner. The sequence is that of Lon protease 2 from Bdellovibrio bacteriovorus (strain ATCC 15356 / DSM 50701 / NCIMB 9529 / HD100).